Consider the following 117-residue polypeptide: Reprimo-like protein (117 aa).

A helical transmembrane segment spans residues 64–84; that stretch reads VAQIAVLCVLSLTVVFGVFFL. Position 106 is a phosphoserine (S106).

The protein belongs to the reprimo family.

It is found in the membrane. The polypeptide is Reprimo-like protein (Rprml) (Mus musculus (Mouse)).